Reading from the N-terminus, the 206-residue chain is Small ribosomal subunit protein uS4 (206 aa).

Positions 96-156 (GRLDNVVYRM…EKSKKQARIK (61 aa)) constitute an S4 RNA-binding domain.

Belongs to the universal ribosomal protein uS4 family. In terms of assembly, part of the 30S ribosomal subunit. Contacts protein S5. The interaction surface between S4 and S5 is involved in control of translational fidelity.

In terms of biological role, one of the primary rRNA binding proteins, it binds directly to 16S rRNA where it nucleates assembly of the body of the 30S subunit. Its function is as follows. With S5 and S12 plays an important role in translational accuracy. The protein is Small ribosomal subunit protein uS4 of Haemophilus influenzae (strain 86-028NP).